A 174-amino-acid polypeptide reads, in one-letter code: Gamma-crystallin E (174 aa).

Beta/gamma crystallin 'Greek key' domains are found at residues glycine 2 to serine 40 and glycine 41 to proline 83. The segment at histidine 84–serine 87 is connecting peptide. 2 Beta/gamma crystallin 'Greek key' domains span residues histidine 88–glutamate 128 and glycine 129–methionine 171.

It belongs to the beta/gamma-crystallin family. In terms of tissue distribution, detected in the superior olivary complex and fibers of the ventral aoustic stria of the auditory hindbrain.

Crystallins are the dominant structural components of the vertebrate eye lens. The polypeptide is Gamma-crystallin E (Cryge) (Rattus norvegicus (Rat)).